The sequence spans 387 residues: Histone deacetylase 2 (387 aa).

Residues 73-382 form a histone deacetylase region; sequence KVSIIYSSSY…IENLSRQGLI (310 aa). H201 acts as the Proton donor/acceptor in catalysis. Positions 238, 240, and 318 each coordinate Zn(2+).

It belongs to the histone deacetylase family. HD type 3 subfamily. Requires Zn(2+) as cofactor.

The protein localises to the nucleus. It carries out the reaction N(6)-acetyl-L-lysyl-[histone] + H2O = L-lysyl-[histone] + acetate. Its function is as follows. Responsible for the deacetylation of lysine residues on the N-terminal part of the core histones (H2A, H2B, H3 and H4). Histone deacetylation gives a tag for epigenetic repression and plays an important role in transcriptional regulation, cell cycle progression and developmental events. Histone deacetylases act via the formation of large multiprotein complexes. The protein is Histone deacetylase 2 (HDA2) of Arabidopsis thaliana (Mouse-ear cress).